The sequence spans 230 residues: Ribonuclease 3 (230 aa).

Residues 5 to 125 (YSRFYNILGY…VIGAIYLDSD (121 aa)) form the RNase III domain. Glutamate 40 is a binding site for Mg(2+). Aspartate 44 is an active-site residue. Residues aspartate 111 and glutamate 114 each contribute to the Mg(2+) site. Glutamate 114 is a catalytic residue. The 71-residue stretch at 153-223 (DSKSKLQEIL…AEKMIEMLSQ (71 aa)) folds into the DRBM domain.

This sequence belongs to the ribonuclease III family. In terms of assembly, homodimer. Mg(2+) serves as cofactor.

It localises to the cytoplasm. It catalyses the reaction Endonucleolytic cleavage to 5'-phosphomonoester.. Functionally, digests double-stranded RNA. Involved in the processing of primary rRNA transcript to yield the immediate precursors to the large and small rRNAs (23S and 16S). Processes some mRNAs, and tRNAs when they are encoded in the rRNA operon. Processes pre-crRNA and tracrRNA of type II CRISPR loci if present in the organism. This Francisella tularensis subsp. holarctica (strain OSU18) protein is Ribonuclease 3.